The chain runs to 129 residues: Cytochrome b5 (129 aa).

Residues 8-84 (TTIYTHEEVA…LEKLYIGNLK (77 aa)) form the Cytochrome b5 heme-binding domain. The heme site is built by His-43 and His-67. A helical transmembrane segment spans residues 104-124 (GINFPLIAVGVFLAAFGVYYY).

It belongs to the cytochrome b5 family.

It localises to the endoplasmic reticulum membrane. It is found in the microsome membrane. Functionally, membrane bound hemoprotein which function as an electron carrier for several membrane bound oxygenases. The polypeptide is Cytochrome b5 (Cytb5) (Candida tropicalis (Yeast)).